The primary structure comprises 460 residues: tRNA modification GTPase MnmE (460 aa).

Residues arginine 25, glutamate 87, and arginine 126 each coordinate (6S)-5-formyl-5,6,7,8-tetrahydrofolate. The TrmE-type G domain occupies 221–381; sequence GLKVAIVGRP…LETAIANLVQ (161 aa). Asparagine 231 contacts K(+). Residues 231–236, 250–256, and 275–278 each bind GTP; these read NVGKSS, TDLPGTT, and DTAG. Residue serine 235 participates in Mg(2+) binding. Positions 250, 252, and 255 each coordinate K(+). Threonine 256 provides a ligand contact to Mg(2+). Lysine 460 provides a ligand contact to (6S)-5-formyl-5,6,7,8-tetrahydrofolate.

Belongs to the TRAFAC class TrmE-Era-EngA-EngB-Septin-like GTPase superfamily. TrmE GTPase family. As to quaternary structure, homodimer. Heterotetramer of two MnmE and two MnmG subunits. K(+) is required as a cofactor.

Its subcellular location is the cytoplasm. Its function is as follows. Exhibits a very high intrinsic GTPase hydrolysis rate. Involved in the addition of a carboxymethylaminomethyl (cmnm) group at the wobble position (U34) of certain tRNAs, forming tRNA-cmnm(5)s(2)U34. This is tRNA modification GTPase MnmE from Picosynechococcus sp. (strain ATCC 27264 / PCC 7002 / PR-6) (Agmenellum quadruplicatum).